The primary structure comprises 378 residues: Putative glutamate--cysteine ligase 2 (378 aa).

The protein belongs to the glutamate--cysteine ligase type 2 family. YbdK subfamily.

It catalyses the reaction L-cysteine + L-glutamate + ATP = gamma-L-glutamyl-L-cysteine + ADP + phosphate + H(+). In terms of biological role, ATP-dependent carboxylate-amine ligase which exhibits weak glutamate--cysteine ligase activity. This chain is Putative glutamate--cysteine ligase 2, found in Pseudomonas paraeruginosa (strain DSM 24068 / PA7) (Pseudomonas aeruginosa (strain PA7)).